A 981-amino-acid chain; its full sequence is Mineralocorticoid receptor (981 aa).

The tract at residues 1 to 603 is modulating; that stretch reads METKGYHSLP…STGSSRPSKI (603 aa). Polar residues predominate over residues 234–258; the sequence is SLTCSPSVENRGSRSHSPTHASNVG. 2 disordered regions span residues 234–331 and 355–376; these read SLTC…ASTV and AIQDVVPSPDTHEKGAHDVPFP. Residues Ser-250, Ser-259, Ser-283, Ser-287, and Ser-299 each carry the phosphoserine modification. 2 stretches are compositionally biased toward low complexity: residues 259–300 and 309–327; these read SPLS…VSSP and SVSSPSNNTNNRSTLSSPT. Residues Cys-604, Cys-607, Cys-621, Cys-624, Cys-640, Cys-646, Cys-656, and Cys-659 each contribute to the Zn(2+) site. 2 consecutive NR C4-type zinc fingers follow at residues 604–624 and 640–664; these read CLVCGDEASGCHYGVVTCGSC and CAGRNDCIIDKIRRKNCPACRLQKC. Positions 604-669 form a DNA-binding region, nuclear receptor; sequence CLVCGDEASG…RLQKCLQAGM (66 aa). A hinge region spans residues 670–722; the sequence is NLGARKSKKLGKLKGLHEEQPQQPPPPPPQSPEEGTTYIAPTKEPSVNSALVP. The segment at 684 to 710 is disordered; sequence GLHEEQPQQPPPPPPQSPEEGTTYIAP. The segment covering 691-700 has biased composition (pro residues); that stretch reads QQPPPPPPQS. Positions 723–961 constitute an NR LBD domain; it reads QLTSITHALT…EFPAMLVEII (239 aa). Positions 767 and 773 each coordinate 21-hydroxyprogesterone. Aldosterone is bound by residues Asn-767 and Gln-773. Residues Asn-767 and Gln-773 each contribute to the progesterone site. Positions 779–782 are important for coactivator binding; the sequence is KWAK. 2 residues coordinate 21-hydroxyprogesterone: Arg-814 and Thr-942. Residues Arg-814 and Thr-942 each coordinate aldosterone. Positions 814 and 942 each coordinate progesterone.

Belongs to the nuclear hormone receptor family. NR3 subfamily. Heteromultimeric cytoplasmic complex with HSP90, HSP70, and FKBP4, in the absence of ligand. After ligand binding, it translocates to the nucleus and binds to DNA as a homodimer and as a heterodimer with NR3C1. Binds the coactivator NCOA2. May interact with HSD11B2 in the absence of ligand. Binds the coactivators NCOA1, TIF1 and NRIP1. In terms of processing, phosphorylated. Detected in liver, brain, heart, kidney, colon, aorta, hippocampus, hypothalamus and adrenal fasciculata.

The protein localises to the cytoplasm. The protein resides in the nucleus. It localises to the endoplasmic reticulum membrane. Its function is as follows. Receptor for both mineralocorticoids (MC) such as aldosterone and glucocorticoids (GC) such as corticosterone or cortisol. Binds to mineralocorticoid response elements (MRE) and transactivates target genes. The effect of MC is to increase ion and water transport and thus raise extracellular fluid volume and blood pressure and lower potassium levels. In Rattus norvegicus (Rat), this protein is Mineralocorticoid receptor (Nr3c2).